Reading from the N-terminus, the 291-residue chain is Methylsterol monooxygenase 1-3 (291 aa).

3 helical membrane passes run 41–61 (TILV…IVEW), 92–112 (FLLV…MVGI), and 114–134 (SGLP…YFLI). The Fatty acid hydroxylase domain occupies 128-263 (LVVYFLIEDY…FTYCDYIYGT (136 aa)). A Histidine box-1 motif is present at residues 143-147 (HRWMH). The short motif at 156-160 (HRIHH) is the Histidine box-2 element. Residues 178–198 (ILILGIPTFLGPAIAPGHIMT) traverse the membrane as a helical segment. The Histidine box-3 motif lies at 235-241 (YHDYHHY).

Belongs to the sterol desaturase family. In terms of assembly, interacts with ACBP1. Requires Fe cation as cofactor. In terms of tissue distribution, expressed at low levels in leaves, roots, siliques and flowers.

Its subcellular location is the endoplasmic reticulum membrane. It carries out the reaction 4,4-dimethyl-5alpha-cholest-7-en-3beta-ol + 6 Fe(II)-[cytochrome b5] + 3 O2 + 5 H(+) = 4alpha-carboxy-4beta-methyl-5alpha-cholest-7-ene-3beta-ol + 6 Fe(III)-[cytochrome b5] + 4 H2O. The catalysed reaction is 24-methylidenelophenol + 6 Fe(II)-[cytochrome b5] + 3 O2 + 5 H(+) = 4alpha-carboxy-ergosta-7,24(24(1))-dien-3beta-ol + 6 Fe(III)-[cytochrome b5] + 4 H2O. Functionally, non-heme iron oxygenase involved in sterols biosynthesis by catalyzing the removal of the first methyl group at the C-4 position. 4,4-dimethyl-9-beta,19-cyclopropylsterols such as 24-methylenecycloartanol are the preferred substrates. The polypeptide is Methylsterol monooxygenase 1-3 (Arabidopsis thaliana (Mouse-ear cress)).